The sequence spans 380 residues: Cytochrome b (380 aa).

Transmembrane regions (helical) follow at residues 34-54, 78-99, 114-134, and 179-199; these read FGSLLGLCLVSQILTGLFLAM, WLLRNLHANGASFMFICLYMHI, WNIGVMLLVLTMATAFLGYVL, and FFAFHFFLPFMIAGLSVVHLL. His-84 and His-98 together coordinate heme b. His-183 and His-197 together coordinate heme b. A ubiquinone is bound at residue His-202. The next 4 membrane-spanning stretches (helical) occupy residues 227–247, 289–309, 321–341, and 348–368; these read YKDVVGFVVLLAGLVFIALFS, LGGVVALAMSIVVLFFMPFVH, LAQVLFWLMVVNVLLLTWLGG, and YIFLGQAASVIYFVNILLLIP.

This sequence belongs to the cytochrome b family. In terms of assembly, the cytochrome bc1 complex contains 3 respiratory subunits (MT-CYB, CYC1 and UQCRFS1), 2 core proteins (UQCRC1 and UQCRC2) and probably 6 low-molecular weight proteins. Heme b is required as a cofactor.

Its subcellular location is the mitochondrion inner membrane. In terms of biological role, component of the ubiquinol-cytochrome c reductase complex (complex III or cytochrome b-c1 complex) that is part of the mitochondrial respiratory chain. The b-c1 complex mediates electron transfer from ubiquinol to cytochrome c. Contributes to the generation of a proton gradient across the mitochondrial membrane that is then used for ATP synthesis. This is Cytochrome b (MT-CYB) from Branchiostoma floridae (Florida lancelet).